Consider the following 508-residue polypeptide: MASPAPAPPAASSSAAGSAPPPRIGLAGLATMGQNLALNIAEKGFPISVYNRTAAKVDATVSRAEAEGALPVLGHRDPRGFVLSLSRPRTVVLLVQAGRAVDATIDALVPYLDAGDAIVDGGNEWYQNTERRIEEAAARGILYLGMGVSGGEEGARNGPSLMPGGHIDAYNNIRDILEKAAAQTEDGACVTFVGPGGAGNFVKMVHNGIEYGDMQLIAEAYDVLRRVGGLSNSEIADVFAEWNRGELESFLVEITADIFTVADPLDGSGGGGLVDKILDKTGMKGTGKWTVQQAAELAIAAPTIAASLDGRYLSGLKDERVAAAGVLEAEGMPSGLLETINVDKKMLVDRVRQALYASKICSYAQGMNLLRAKSVEKGWNLNLAELARIWKGGCIIRAKFLDRIKKAYDRNPELANLIVDREFAREMVQRQNAWRWVVARAVEAGISTPGMSASLSYFDTYRCSRLPANLIQAQRDLFGAHTYERIDRPGSFHTEWTKLARKSNGAAI.

A chloroplast-targeting transit peptide spans 1–12 (MASPAPAPPAAS). Residues 28-33 (GLATMG), 51-53 (NRT), 95-97 (VQA), and Asn123 contribute to the NADP(+) site. Substrate-binding positions include Asn123 and 149–151 (SGG). The active-site Proton acceptor is Lys203. 206-207 (HN) contacts substrate. The active-site Proton donor is the Glu210. Residues Tyr211, Lys284, Arg311, Arg475, and His481 each contribute to the substrate site.

This sequence belongs to the 6-phosphogluconate dehydrogenase family. In terms of assembly, homodimer.

The protein resides in the plastid. It localises to the chloroplast. The enzyme catalyses 6-phospho-D-gluconate + NADP(+) = D-ribulose 5-phosphate + CO2 + NADPH. Its pathway is carbohydrate degradation; pentose phosphate pathway; D-ribulose 5-phosphate from D-glucose 6-phosphate (oxidative stage): step 3/3. In terms of biological role, catalyzes the oxidative decarboxylation of 6-phosphogluconate to ribulose 5-phosphate and CO(2), with concomitant reduction of NADP to NADPH. This chain is 6-phosphogluconate dehydrogenase, decarboxylating 2, chloroplastic (G6PGH2), found in Oryza sativa subsp. japonica (Rice).